The sequence spans 506 residues: BTB/POZ domain-containing protein 16 (506 aa).

Residues 150 to 206 (INDPAVTRVAFALALKNLYMNEVEMTVDNVLGVLASAHILQFNRLFRKCVSTMLNRL) form the BTB domain.

This Rattus norvegicus (Rat) protein is BTB/POZ domain-containing protein 16 (Btbd16).